A 709-amino-acid chain; its full sequence is Polyribonucleotide nucleotidyltransferase (709 aa).

Residues aspartate 487 and aspartate 493 each contribute to the Mg(2+) site. Residues 554-613 enclose the KH domain; the sequence is PRIHTMKISSDKIKDVIGKGGAVIRALCEETGTTIEIEDDGTIKIAATEGAAAKEAIRRI. An S1 motif domain is found at 623-691; the sequence is GKIYTGKVMR…RQGRIRLSIK (69 aa).

This sequence belongs to the polyribonucleotide nucleotidyltransferase family. Component of the RNA degradosome, which is a multiprotein complex involved in RNA processing and mRNA degradation. Mg(2+) serves as cofactor.

It localises to the cytoplasm. The catalysed reaction is RNA(n+1) + phosphate = RNA(n) + a ribonucleoside 5'-diphosphate. Involved in mRNA degradation. Catalyzes the phosphorolysis of single-stranded polyribonucleotides processively in the 3'- to 5'-direction. The polypeptide is Polyribonucleotide nucleotidyltransferase (Aliivibrio fischeri (strain MJ11) (Vibrio fischeri)).